A 160-amino-acid chain; its full sequence is Large ribosomal subunit protein eL21B (160 aa).

The interval 114–140 is disordered; the sequence is AKRKEAKAQGKTVQLRRQPAPPATAHF.

The protein belongs to the eukaryotic ribosomal protein eL21 family. As to quaternary structure, component of the large ribosomal subunit (LSU). Mature yeast ribosomes consist of a small (40S) and a large (60S) subunit. The 40S small subunit contains 1 molecule of ribosomal RNA (18S rRNA) and at least 33 different proteins. The large 60S subunit contains 3 rRNA molecules (25S, 5.8S and 5S rRNA) and at least 46 different proteins.

The protein resides in the cytoplasm. Its function is as follows. Component of the ribosome, a large ribonucleoprotein complex responsible for the synthesis of proteins in the cell. The small ribosomal subunit (SSU) binds messenger RNAs (mRNAs) and translates the encoded message by selecting cognate aminoacyl-transfer RNA (tRNA) molecules. The large subunit (LSU) contains the ribosomal catalytic site termed the peptidyl transferase center (PTC), which catalyzes the formation of peptide bonds, thereby polymerizing the amino acids delivered by tRNAs into a polypeptide chain. The nascent polypeptides leave the ribosome through a tunnel in the LSU and interact with protein factors that function in enzymatic processing, targeting, and the membrane insertion of nascent chains at the exit of the ribosomal tunnel. The protein is Large ribosomal subunit protein eL21B (rpl2102) of Schizosaccharomyces pombe (strain 972 / ATCC 24843) (Fission yeast).